A 94-amino-acid polypeptide reads, in one-letter code: Co-chaperonin GroES (94 aa).

The protein belongs to the GroES chaperonin family. As to quaternary structure, heptamer of 7 subunits arranged in a ring. Interacts with the chaperonin GroEL.

The protein localises to the cytoplasm. In terms of biological role, together with the chaperonin GroEL, plays an essential role in assisting protein folding. The GroEL-GroES system forms a nano-cage that allows encapsulation of the non-native substrate proteins and provides a physical environment optimized to promote and accelerate protein folding. GroES binds to the apical surface of the GroEL ring, thereby capping the opening of the GroEL channel. The sequence is that of Co-chaperonin GroES from Listeria innocua serovar 6a (strain ATCC BAA-680 / CLIP 11262).